The primary structure comprises 148 residues: Large ribosomal subunit protein uL13 (148 aa).

The segment at 128 to 148 (PEHPHQAQNPQPFEINAKVEK) is disordered.

Belongs to the universal ribosomal protein uL13 family. Part of the 50S ribosomal subunit.

This protein is one of the early assembly proteins of the 50S ribosomal subunit, although it is not seen to bind rRNA by itself. It is important during the early stages of 50S assembly. The chain is Large ribosomal subunit protein uL13 from Saccharopolyspora erythraea (strain ATCC 11635 / DSM 40517 / JCM 4748 / NBRC 13426 / NCIMB 8594 / NRRL 2338).